Here is a 929-residue protein sequence, read N- to C-terminus: LPS-assembly protein LptD (929 aa).

An N-terminal signal peptide occupies residues 1-33 (MAVKSLVFRRKFPLLVTGSLLALQPVAALTVQA). Residues 58-101 (NLPPRPAHTATSVSTAAAGSSVSGSGGETVEAEPTQRLVTESGG) form a disordered region. A compositionally biased stretch (low complexity) spans 66–90 (TATSVSTAAAGSSVSGSGGETVEAE).

The protein belongs to the LptD family. In terms of assembly, component of the lipopolysaccharide transport and assembly complex. Interacts with LptE and LptA.

Its subcellular location is the cell outer membrane. In terms of biological role, together with LptE, is involved in the assembly of lipopolysaccharide (LPS) at the surface of the outer membrane. The polypeptide is LPS-assembly protein LptD (Pseudomonas aeruginosa (strain LESB58)).